We begin with the raw amino-acid sequence, 370 residues long: Succinoglycan biosynthesis protein ExoH (370 aa).

The next 10 membrane-spanning stretches (helical) occupy residues 14-34 (ILLI…WSPF), 46-66 (VFLG…ISGY), 88-108 (TVLL…YAIQ), 144-164 (LYFL…ALLV), 170-190 (VTLL…IFLK), 193-213 (ILFG…IKML), 216-236 (FAAP…VGLY), 244-264 (LWLD…SWAI), 282-302 (GLSF…WMIW), and 307-327 (LSYY…ILVA). Residues 350 to 370 (AKRMATQPPQGAQAGYSPQQR) form a disordered region.

The protein belongs to the acyltransferase 3 family.

The protein localises to the cell membrane. The protein operates within glycan metabolism; exopolysaccharide biosynthesis. Required for the succinyl modification of the seventh sugar (glucose) of the octasaccharide subunit of succinoglycan (EPS I). The protein is Succinoglycan biosynthesis protein ExoH (exoH) of Rhizobium meliloti (strain 1021) (Ensifer meliloti).